The primary structure comprises 120 residues: Cu-Zn superoxide dismutase-like protein OPG175 (120 aa).

A disulfide bond links C52 and C102.

It belongs to the Cu-Zn superoxide dismutase family.

It is found in the virion. Its subcellular location is the host cytoplasm. Functionally, superoxide dismutase-like protein with no enzymatic activity. This Vaccinia virus (strain Tashkent) (VACV) protein is Cu-Zn superoxide dismutase-like protein OPG175 (OPG175).